The chain runs to 1033 residues: SIT4-associating protein SAP190 (1033 aa).

Disordered stretches follow at residues 32–82, 147–213, 768–813, and 828–1033; these read DQDD…TTES, PEII…QVET, FGND…HDSG, and ENEE…KEAF. Positions 158–170 are enriched in basic and acidic residues; that stretch reads ILIERDRKDKKED. Positions 171–182 are enriched in acidic residues; it reads AEEGGDSEETTN. A compositionally biased stretch (basic and acidic residues) spans 183–195; it reads DSDHDSGDERSVD. A Phosphoserine modification is found at S774. 2 stretches are compositionally biased toward acidic residues: residues 784-793 and 828-838; these read SEDIIGDTEG and ENEEDYAEYSD. A phosphoserine mark is found at S857, S862, and S892. Residues 858–879 show a composition bias toward basic and acidic residues; that stretch reads DDGKSKSAESEFTDKISEHRDG. The span at 909-924 shows a compositional bias: polar residues; sequence SRSQPSDPKLQDQNIF. Positions 932-944 are enriched in acidic residues; sequence GVGDDDDYMDPND. At T990 the chain carries Phosphothreonine. S991 bears the Phosphoserine mark. The span at 1000–1018 shows a compositional bias: acidic residues; sequence ISSDEEDSEDEDEENDMGN.

This sequence belongs to the SAPS family. As to quaternary structure, associates with the SIT4 protein phosphatase catalytic subunit in a cell-cycle-dependent manner. In terms of processing, hyperphosphorylated in the absence of SIT4.

It localises to the cytoplasm. Functionally, positive regulator of protein phosphatase SIT4. Involved in the general amino acid control (GAAC) response regulated by TOR. Involved in the dephosphorylation of the elongator complex subunit IKI3. This is SIT4-associating protein SAP190 (SAP190) from Saccharomyces cerevisiae (strain AWRI1631) (Baker's yeast).